The following is a 186-amino-acid chain: Translation initiation factor IF-3 (186 aa).

Residues 1–20 (MINRNSGKDRDRSRSGDKEL) are disordered.

It belongs to the IF-3 family. As to quaternary structure, monomer.

It is found in the cytoplasm. Functionally, IF-3 binds to the 30S ribosomal subunit and shifts the equilibrium between 70S ribosomes and their 50S and 30S subunits in favor of the free subunits, thus enhancing the availability of 30S subunits on which protein synthesis initiation begins. The sequence is that of Translation initiation factor IF-3 from Borrelia duttonii (strain Ly).